Consider the following 248-residue polypeptide: Probable transcriptional regulatory protein FTM_1203 (248 aa).

This sequence belongs to the TACO1 family.

It is found in the cytoplasm. The sequence is that of Probable transcriptional regulatory protein FTM_1203 from Francisella tularensis subsp. mediasiatica (strain FSC147).